Reading from the N-terminus, the 207-residue chain is Thiamine-phosphate synthase (207 aa).

4-amino-2-methyl-5-(diphosphooxymethyl)pyrimidine contacts are provided by residues 37–41 and Asn69; that span reads QYRHK. Mg(2+) is bound by residues Asp70 and Asp89. 4-amino-2-methyl-5-(diphosphooxymethyl)pyrimidine-binding residues include Ser108 and Lys138. 2-[(2R,5Z)-2-carboxy-4-methylthiazol-5(2H)-ylidene]ethyl phosphate-binding positions include Gly165 and 185-186; that span reads IS.

Belongs to the thiamine-phosphate synthase family. Mg(2+) is required as a cofactor.

It carries out the reaction 2-[(2R,5Z)-2-carboxy-4-methylthiazol-5(2H)-ylidene]ethyl phosphate + 4-amino-2-methyl-5-(diphosphooxymethyl)pyrimidine + 2 H(+) = thiamine phosphate + CO2 + diphosphate. It catalyses the reaction 2-(2-carboxy-4-methylthiazol-5-yl)ethyl phosphate + 4-amino-2-methyl-5-(diphosphooxymethyl)pyrimidine + 2 H(+) = thiamine phosphate + CO2 + diphosphate. The catalysed reaction is 4-methyl-5-(2-phosphooxyethyl)-thiazole + 4-amino-2-methyl-5-(diphosphooxymethyl)pyrimidine + H(+) = thiamine phosphate + diphosphate. It functions in the pathway cofactor biosynthesis; thiamine diphosphate biosynthesis; thiamine phosphate from 4-amino-2-methyl-5-diphosphomethylpyrimidine and 4-methyl-5-(2-phosphoethyl)-thiazole: step 1/1. In terms of biological role, condenses 4-methyl-5-(beta-hydroxyethyl)thiazole monophosphate (THZ-P) and 2-methyl-4-amino-5-hydroxymethyl pyrimidine pyrophosphate (HMP-PP) to form thiamine monophosphate (TMP). The polypeptide is Thiamine-phosphate synthase (Janthinobacterium sp. (strain Marseille) (Minibacterium massiliensis)).